A 299-amino-acid polypeptide reads, in one-letter code: Taste receptor type 2 member 16 (299 aa).

Topologically, residues 1-5 (MVPTQ) are extracellular. The helical transmembrane segment at 6 to 26 (VTIFSIIMYVLESLVIIVQSC) threads the bilayer. The Cytoplasmic segment spans residues 27 to 47 (TTVAVLFREWMHFQRLSPVET). The helical transmembrane segment at 48–68 (ILISLGISHFCLQWTSMLYNF) threads the bilayer. Residues 69–82 (GTYSRPVLLFWKVS) are Extracellular-facing. The helical transmembrane segment at 83 to 103 (VVWEFMNILTFWLTSWLAVLY) threads the bilayer. The Cytoplasmic portion of the chain corresponds to 104-125 (CVKVSSFTHPIFLWLRMKILKL). Residues 126-146 (VLWLILGALIASCLSIIPSVV) traverse the membrane as a helical segment. At 147-183 (KYHIQMELVTLDNLPKNNSLILRLQQFEWYFSNPLKM) the chain is on the extracellular side. The N-linked (GlcNAc...) asparagine glycan is linked to Asn163. Residues 184-204 (IGFGIPFFVFLASIILLTVSL) form a helical membrane-spanning segment. Residues 205 to 233 (VQHWVQMKHYSSSNSSLKAQFTVLKSLAT) lie on the Cytoplasmic side of the membrane. The chain crosses the membrane as a helical span at residues 234-254 (FFTFFTSYFLTIVISFIGTVF). Residues 255–258 (DKKS) are Extracellular-facing. A helical transmembrane segment spans residues 259-279 (WFWVCEAVIYGLVCIHFTSLM). At 280 to 299 (MSNPALKKALKLQFWSPEPS) the chain is on the cytoplasmic side.

This sequence belongs to the G-protein coupled receptor T2R family. As to quaternary structure, interacts with RTP3 and RTP4.

The protein localises to the cell membrane. Its function is as follows. Gustducin-coupled receptor implicated in the perception of bitter compounds in the oral cavity and the gastrointestinal tract. Signals through PLCB2 and the calcium-regulated cation channel TRPM5. The chain is Taste receptor type 2 member 16 (Tas2r16) from Mus musculus (Mouse).